The following is a 212-amino-acid chain: Small ribosomal subunit protein eS1 (212 aa).

It belongs to the eukaryotic ribosomal protein eS1 family.

The sequence is that of Small ribosomal subunit protein eS1 from Staphylothermus marinus (strain ATCC 43588 / DSM 3639 / JCM 9404 / F1).